Reading from the N-terminus, the 499-residue chain is Aspartyl/glutamyl-tRNA(Asn/Gln) amidotransferase subunit B (499 aa).

The protein belongs to the GatB/GatE family. GatB subfamily. In terms of assembly, heterotrimer of A, B and C subunits.

It catalyses the reaction L-glutamyl-tRNA(Gln) + L-glutamine + ATP + H2O = L-glutaminyl-tRNA(Gln) + L-glutamate + ADP + phosphate + H(+). It carries out the reaction L-aspartyl-tRNA(Asn) + L-glutamine + ATP + H2O = L-asparaginyl-tRNA(Asn) + L-glutamate + ADP + phosphate + 2 H(+). Functionally, allows the formation of correctly charged Asn-tRNA(Asn) or Gln-tRNA(Gln) through the transamidation of misacylated Asp-tRNA(Asn) or Glu-tRNA(Gln) in organisms which lack either or both of asparaginyl-tRNA or glutaminyl-tRNA synthetases. The reaction takes place in the presence of glutamine and ATP through an activated phospho-Asp-tRNA(Asn) or phospho-Glu-tRNA(Gln). The chain is Aspartyl/glutamyl-tRNA(Asn/Gln) amidotransferase subunit B from Bartonella quintana (strain Toulouse) (Rochalimaea quintana).